The sequence spans 528 residues: Membrane protein insertase YidC (528 aa).

5 consecutive transmembrane segments (helical) span residues 13 to 33 (ILLAVVISFLFFVIYDYFFIP), 336 to 356 (WGWAIVVMTLIVRIILFPLTY), 406 to 426 (LPILLQIPIFFAIYRVLLNAI), 446 to 466 (YFILPILMGATMFLQQLITPM), and 481 to 501 (PVIFTFFFITFPAGLTLYWFV).

This sequence belongs to the OXA1/ALB3/YidC family. Type 1 subfamily. In terms of assembly, interacts with the Sec translocase complex via SecD. Specifically interacts with transmembrane segments of nascent integral membrane proteins during membrane integration.

The protein localises to the cell inner membrane. Functionally, required for the insertion and/or proper folding and/or complex formation of integral membrane proteins into the membrane. Involved in integration of membrane proteins that insert both dependently and independently of the Sec translocase complex, as well as at least some lipoproteins. Aids folding of multispanning membrane proteins. The chain is Membrane protein insertase YidC from Campylobacter jejuni subsp. jejuni serotype O:2 (strain ATCC 700819 / NCTC 11168).